We begin with the raw amino-acid sequence, 237 residues long: Protein GrpE (237 aa).

2 disordered regions span residues 24-56 (LILE…KQLQ) and 204-237 (SAGS…PQPS).

The protein belongs to the GrpE family. As to quaternary structure, homodimer.

The protein localises to the cytoplasm. Its function is as follows. Participates actively in the response to hyperosmotic and heat shock by preventing the aggregation of stress-denatured proteins, in association with DnaK and GrpE. It is the nucleotide exchange factor for DnaK and may function as a thermosensor. Unfolded proteins bind initially to DnaJ; upon interaction with the DnaJ-bound protein, DnaK hydrolyzes its bound ATP, resulting in the formation of a stable complex. GrpE releases ADP from DnaK; ATP binding to DnaK triggers the release of the substrate protein, thus completing the reaction cycle. Several rounds of ATP-dependent interactions between DnaJ, DnaK and GrpE are required for fully efficient folding. This chain is Protein GrpE, found in Synechococcus sp. (strain JA-2-3B'a(2-13)) (Cyanobacteria bacterium Yellowstone B-Prime).